We begin with the raw amino-acid sequence, 85 residues long: RNA-binding protein Hfq (85 aa).

Residues 10 to 69 enclose the Sm domain; sequence DPFLNILRKEHVPVSIYLVNGIKLQGQIESFDQYVVLLKNTVTQMVYKHAISTVVPARPV.

Belongs to the Hfq family. Homohexamer.

In terms of biological role, RNA chaperone that binds small regulatory RNA (sRNAs) and mRNAs to facilitate mRNA translational regulation in response to envelope stress, environmental stress and changes in metabolite concentrations. Also binds with high specificity to tRNAs. The polypeptide is RNA-binding protein Hfq (Laribacter hongkongensis (strain HLHK9)).